The primary structure comprises 184 residues: Acireductone dioxygenase (184 aa).

Positions 97, 99, 103, and 141 each coordinate Fe(2+). Ni(2+) contacts are provided by His97, His99, Glu103, and His141.

It belongs to the acireductone dioxygenase (ARD) family. Monomer. Fe(2+) is required as a cofactor. The cofactor is Ni(2+).

It carries out the reaction 1,2-dihydroxy-5-(methylsulfanyl)pent-1-en-3-one + O2 = 3-(methylsulfanyl)propanoate + CO + formate + 2 H(+). The catalysed reaction is 1,2-dihydroxy-5-(methylsulfanyl)pent-1-en-3-one + O2 = 4-methylsulfanyl-2-oxobutanoate + formate + 2 H(+). Its pathway is amino-acid biosynthesis; L-methionine biosynthesis via salvage pathway; L-methionine from S-methyl-5-thio-alpha-D-ribose 1-phosphate: step 5/6. In terms of biological role, catalyzes 2 different reactions between oxygen and the acireductone 1,2-dihydroxy-3-keto-5-methylthiopentene (DHK-MTPene) depending upon the metal bound in the active site. Fe-containing acireductone dioxygenase (Fe-ARD) produces formate and 2-keto-4-methylthiobutyrate (KMTB), the alpha-ketoacid precursor of methionine in the methionine recycle pathway. Ni-containing acireductone dioxygenase (Ni-ARD) produces methylthiopropionate, carbon monoxide and formate, and does not lie on the methionine recycle pathway. The protein is Acireductone dioxygenase of Parvibaculum lavamentivorans (strain DS-1 / DSM 13023 / NCIMB 13966).